Reading from the N-terminus, the 207-residue chain is MEVHVIDHPLAAARLTALRDERTGNAAFRKALRELTLVLVYEATRAAPTESVAIRTPLAATTGLRLANPPLLVPVLRAGLGMVDEAHAALPEARVGFVGIARNEQTHQPVPYLESLPDDLSGLPVMVLDPMLATGGSMTFTVDLLLSRGATDITVLCVVAAPQGVAALEKAAPNARLFTVAIDDGLNEEAYIVPGLGDAGDRQFGPR.

Residues Arg77, Arg102, and 129–137 (DPMLATGGS) contribute to the 5-phospho-alpha-D-ribose 1-diphosphate site. Residues Ile192 and 197 to 199 (GDA) contribute to the uracil site. A 5-phospho-alpha-D-ribose 1-diphosphate-binding site is contributed by Asp198.

Belongs to the UPRTase family. Requires Mg(2+) as cofactor.

The catalysed reaction is UMP + diphosphate = 5-phospho-alpha-D-ribose 1-diphosphate + uracil. The protein operates within pyrimidine metabolism; UMP biosynthesis via salvage pathway; UMP from uracil: step 1/1. Allosterically activated by GTP. In terms of biological role, catalyzes the conversion of uracil and 5-phospho-alpha-D-ribose 1-diphosphate (PRPP) to UMP and diphosphate. This chain is Uracil phosphoribosyltransferase, found in Mycobacterium marinum (strain ATCC BAA-535 / M).